A 274-amino-acid chain; its full sequence is Aquaporin C (274 aa).

At 1-33 (MPFLHLFTPYTNADNTKLILRVNESRLRLFTRQ) the chain is on the cytoplasmic side. The chain crosses the membrane as a helical span at residues 34-54 (LLAEFFGTLFVVYIVSGSTLA). Over 55–66 (ANFAVSDPIVRV) the chain is Extracellular. A helical transmembrane segment spans residues 67-87 (CLICLVQGFAFAAIIWSISGI). Residues 88–105 (SGCQLNPAVTVGCVTTGR) lie on the Cytoplasmic side of the membrane. The NPA 1 motif lies at 93 to 95 (NPA). A helical membrane pass occupies residues 106–126 (MGILNGIAFIIFQCVGALVGA). The Extracellular portion of the chain corresponds to 127 to 154 (GMMKASLPTFYERDLSATTLATGVNVAR). The chain crosses the membrane as a helical span at residues 155–175 (GFFLEMVTTSFLVFVVLGVAV). Over 176-185 (YNEWDPKISR) the chain is Cytoplasmic. The helical transmembrane segment at 186–206 (VAPLAIGCAVIAGVGFLNLFT) threads the bilayer. Residues 207–229 (GGSLNPARSFGPAVFSDTWHRHY) are Extracellular-facing. Residues 211–213 (NPA) carry the NPA 2 motif. The chain crosses the membrane as a helical span at residues 230–250 (IYWFGPICGGIIAGLFWRIFL). Residues 251 to 274 (SEKVLLIDRPYTDFHRSTYGTATK) lie on the Cytoplasmic side of the membrane.

It belongs to the MIP/aquaporin (TC 1.A.8) family.

It is found in the cell membrane. Functionally, may form a water-specific channel. The polypeptide is Aquaporin C (wacA) (Dictyostelium discoideum (Social amoeba)).